Consider the following 173-residue polypeptide: Trafficking regulator of GLUT4 1 (173 aa).

A compositionally biased stretch (pro residues) spans 1 to 10 (MANPAQPPLQ). Residues 1–20 (MANPAQPPLQDPGSTSPLEL) are disordered. The Cytoplasmic segment spans residues 1–102 (MANPAQPPLQ…QDQEAPKDYL (102 aa)). Phosphoserine is present on residues S16, S43, S45, S70, S84, and S85. The segment at residues 103-123 (VLAIASCFCPVWPLNLIPLIF) is an intramembrane region (helical). At 124-150 (SIMSRSSVQQGDLDGARRLGRLARLLS) the chain is on the cytoplasmic side. A helical transmembrane segment spans residues 151–171 (ITFIILGIVIIIVAVTVNFTV). Residues 172 to 173 (PK) are Extracellular-facing.

This sequence belongs to the CD225/Dispanin family. In terms of assembly, interacts with SLC2A4; the interaction is required for proper SLC2A4 reacycling after insulin stimulation. In terms of tissue distribution, expressed specifically in white and brown adipose tissues.

The protein resides in the cell membrane. It is found in the endomembrane system. The protein localises to the cytoplasm. Its subcellular location is the perinuclear region. Functionally, regulates insulin-mediated adipose tissue glucose uptake and transport by modulation of SLC2A4 recycling. Not required for SLC2A4 membrane fusion upon an initial stimulus, but rather is necessary for proper protein recycling during prolonged insulin stimulation. The polypeptide is Trafficking regulator of GLUT4 1 (Trarg1) (Mus musculus (Mouse)).